We begin with the raw amino-acid sequence, 872 residues long: Alanine--tRNA ligase (872 aa).

Residues histidine 567, histidine 571, cysteine 669, and histidine 673 each contribute to the Zn(2+) site.

Belongs to the class-II aminoacyl-tRNA synthetase family. It depends on Zn(2+) as a cofactor.

It localises to the cytoplasm. It catalyses the reaction tRNA(Ala) + L-alanine + ATP = L-alanyl-tRNA(Ala) + AMP + diphosphate. In terms of biological role, catalyzes the attachment of alanine to tRNA(Ala) in a two-step reaction: alanine is first activated by ATP to form Ala-AMP and then transferred to the acceptor end of tRNA(Ala). Also edits incorrectly charged Ser-tRNA(Ala) and Gly-tRNA(Ala) via its editing domain. This Streptococcus gordonii (strain Challis / ATCC 35105 / BCRC 15272 / CH1 / DL1 / V288) protein is Alanine--tRNA ligase.